We begin with the raw amino-acid sequence, 460 residues long: Putative E3 ubiquitin-protein ligase RING1b (460 aa).

The interval 1-85 (MPSLKSFSAA…SQSSSAGELS (85 aa)) is disordered. Basic and acidic residues predominate over residues 21–31 (SEAERFNPEAV). Composition is skewed to acidic residues over residues 32–51 (EKEEDPDKMDEKDESGDEED) and 59–71 (EAEDEEALGEEED). Residues 103-143 (CSICLGIIRKTRTVMECLHRFCRECIDKSMRLGNNECPTCR) form an RING-type zinc finger. The interval 196–300 (QVSQRQSKAL…TEQTHQRDSR (105 aa)) is disordered. The span at 220-234 (RSRRSGGGSRRRRNC) shows a compositional bias: basic residues. A compositionally biased stretch (acidic residues) spans 240–249 (DTSEANDDDD). Basic and acidic residues predominate over residues 250-265 (QNKRGKDSSSDEPCER). Residues 276–290 (SSSNANNNDNCAGNG) are compositionally biased toward low complexity.

Heterodimer with RING1A. Interacts with CLF. Component of the PRC1-like complex, at least composed of RING1A, RING1B and LHP1.

The protein resides in the nucleus. It carries out the reaction S-ubiquitinyl-[E2 ubiquitin-conjugating enzyme]-L-cysteine + [acceptor protein]-L-lysine = [E2 ubiquitin-conjugating enzyme]-L-cysteine + N(6)-ubiquitinyl-[acceptor protein]-L-lysine.. It participates in protein modification; protein ubiquitination. Functionally, putative E3 ubiquitin-protein ligase that mediates monoubiquitination of 'Lys-119' of histone H2A (H2AK119ub), thereby playing a central role in histone code and gene regulation. As part of the PRC1-like complex, repress class I KNOX gene expression. PcG PRC1 complex maintains the transcriptionally repressive state of many genes, including Hox genes, throughout development. PcG PRC1 complex acts via chromatin remodeling and modification of histones, rendering chromatin heritably changed in its expressibility. The protein is Putative E3 ubiquitin-protein ligase RING1b (RING1B) of Arabidopsis thaliana (Mouse-ear cress).